A 133-amino-acid polypeptide reads, in one-letter code: MARGGMEARAQTQVKTPVVGKHVYGELYGVDEKLLQDEGRLRQIVIEAAHIANMHLVEVNSWRFKGGDKEGVSVIALVLESHIAIHTWPTYKFATVDVYTCGEHSDPMSAFRYIVSQLSPKRFTVNYSDRSYK.

The Schiff-base intermediate with substrate; via pyruvic acid role is filled by S81. Pyruvic acid (Ser); by autocatalysis is present on S81. The Proton acceptor; for processing activity role is filled by H86. Residue C101 is the Proton donor; for catalytic activity of the active site.

This sequence belongs to the prokaryotic AdoMetDC family. Type 1 subfamily. As to quaternary structure, heterooctamer of four alpha and four beta chains arranged as a tetramer of alpha/beta heterodimers. Requires pyruvate as cofactor. In terms of processing, is synthesized initially as an inactive proenzyme. Formation of the active enzyme involves a self-maturation process in which the active site pyruvoyl group is generated from an internal serine residue via an autocatalytic post-translational modification. Two non-identical subunits are generated from the proenzyme in this reaction, and the pyruvate is formed at the N-terminus of the alpha chain, which is derived from the carboxyl end of the proenzyme. The post-translation cleavage follows an unusual pathway, termed non-hydrolytic serinolysis, in which the side chain hydroxyl group of the serine supplies its oxygen atom to form the C-terminus of the beta chain, while the remainder of the serine residue undergoes an oxidative deamination to produce ammonia and the pyruvoyl group blocking the N-terminus of the alpha chain.

It catalyses the reaction L-arginine + H(+) = agmatine + CO2. It functions in the pathway amine and polyamine biosynthesis; agmatine biosynthesis; agmatine from L-arginine: step 1/1. Functionally, specifically catalyzes the decarboxylation of L-arginine to agmatine. Has no S-adenosylmethionine decarboxylase (AdoMetDC) activity. The sequence is that of Arginine decarboxylase proenzyme from Pyrobaculum arsenaticum (strain DSM 13514 / JCM 11321 / PZ6).